A 138-amino-acid chain; its full sequence is Ribulose bisphosphate carboxylase small subunit (138 aa).

This sequence belongs to the RuBisCO small chain family. In terms of assembly, heterohexadecamer of 8 large and 8 small subunits.

The protein resides in the plastid. It localises to the chloroplast. In terms of biological role, ruBisCO catalyzes two reactions: the carboxylation of D-ribulose 1,5-bisphosphate, the primary event in carbon dioxide fixation, as well as the oxidative fragmentation of the pentose substrate in the photorespiration process. Both reactions occur simultaneously and in competition at the same active site. Although the small subunit is not catalytic it is essential for maximal activity. This chain is Ribulose bisphosphate carboxylase small subunit, found in Cyanidioschyzon merolae (strain NIES-3377 / 10D) (Unicellular red alga).